The chain runs to 117 residues: Large ribosomal subunit protein uL18 (117 aa).

The protein belongs to the universal ribosomal protein uL18 family. As to quaternary structure, part of the 50S ribosomal subunit; part of the 5S rRNA/L5/L18/L25 subcomplex. Contacts the 5S and 23S rRNAs.

Functionally, this is one of the proteins that bind and probably mediate the attachment of the 5S RNA into the large ribosomal subunit, where it forms part of the central protuberance. This chain is Large ribosomal subunit protein uL18, found in Francisella tularensis subsp. tularensis (strain FSC 198).